A 270-amino-acid polypeptide reads, in one-letter code: 4-hydroxy-tetrahydrodipicolinate reductase (270 aa).

7–12 lines the NAD(+) pocket; sequence GVSGRM. An NADP(+)-binding site is contributed by R34. NAD(+)-binding positions include 97–99 and 121–124; these read GTT and SGNM. Residue H155 is the Proton donor/acceptor of the active site. (S)-2,3,4,5-tetrahydrodipicolinate is bound at residue H156. The Proton donor role is filled by K159. Position 165–166 (165–166) interacts with (S)-2,3,4,5-tetrahydrodipicolinate; that stretch reads GT.

This sequence belongs to the DapB family.

The protein localises to the cytoplasm. It catalyses the reaction (S)-2,3,4,5-tetrahydrodipicolinate + NAD(+) + H2O = (2S,4S)-4-hydroxy-2,3,4,5-tetrahydrodipicolinate + NADH + H(+). It carries out the reaction (S)-2,3,4,5-tetrahydrodipicolinate + NADP(+) + H2O = (2S,4S)-4-hydroxy-2,3,4,5-tetrahydrodipicolinate + NADPH + H(+). Its pathway is amino-acid biosynthesis; L-lysine biosynthesis via DAP pathway; (S)-tetrahydrodipicolinate from L-aspartate: step 4/4. Catalyzes the conversion of 4-hydroxy-tetrahydrodipicolinate (HTPA) to tetrahydrodipicolinate. The protein is 4-hydroxy-tetrahydrodipicolinate reductase of Allorhizobium ampelinum (strain ATCC BAA-846 / DSM 112012 / S4) (Agrobacterium vitis (strain S4)).